Here is a 134-residue protein sequence, read N- to C-terminus: Large-conductance mechanosensitive channel (134 aa).

2 consecutive transmembrane segments (helical) span residues 16–36 (VIDL…VTAL) and 81–101 (GDFL…FIIV).

The protein belongs to the MscL family. In terms of assembly, homopentamer.

The protein localises to the cell inner membrane. Functionally, channel that opens in response to stretch forces in the membrane lipid bilayer. May participate in the regulation of osmotic pressure changes within the cell. The protein is Large-conductance mechanosensitive channel of Xylella fastidiosa (strain 9a5c).